The primary structure comprises 214 residues: Cytochrome b (214 aa).

4 consecutive transmembrane segments (helical) span residues Phe-31–Ile-51, Trp-75–Ile-96, Trp-111–Leu-131, and Phe-176–Ile-196. Residues His-81 and His-95 each coordinate heme b. Heme b-binding residues include His-180 and His-194. Residue His-199 coordinates a ubiquinone.

The protein belongs to the cytochrome b family. In terms of assembly, the cytochrome bc1 complex contains 3 respiratory subunits (MT-CYB, CYC1 and UQCRFS1), 2 core proteins (UQCRC1 and UQCRC2) and probably 6 low-molecular weight proteins. The cofactor is heme b.

Its subcellular location is the mitochondrion inner membrane. Component of the ubiquinol-cytochrome c reductase complex (complex III or cytochrome b-c1 complex) that is part of the mitochondrial respiratory chain. The b-c1 complex mediates electron transfer from ubiquinol to cytochrome c. Contributes to the generation of a proton gradient across the mitochondrial membrane that is then used for ATP synthesis. In Atractaspis micropholis (Mole viper), this protein is Cytochrome b (MT-CYB).